The following is a 433-amino-acid chain: Zinc finger and SCAN domain-containing protein 4 (433 aa).

Positions 44–126 constitute an SCAN box domain; it reads RMVLNSFQDS…RFMEDLTDDS (83 aa). 2 stretches are compositionally biased toward polar residues: residues 162 to 184 and 277 to 298; these read SAQT…TSLE and QPEQ…NSTC. Disordered stretches follow at residues 162–199 and 272–298; these read SAQT…CNSS and AGCI…NSTC. 4 C2H2-type zinc fingers span residues 312 to 334, 340 to 362, 368 to 390, and 396 to 418; these read YKCE…QRRH, FVCP…QIIH, FTCS…ERIH, and YTCP…MRTH. Residues 414–433 form a disordered region; it reads HMRTHEKITPPSVPSTPEAS.

It localises to the nucleus. It is found in the chromosome. The protein localises to the telomere. Its function is as follows. Embryonic stem (ES) cell-specific transcription factor required to regulate ES cell pluripotency. Binds telomeres and plays a key role in genomic stability in ES cells by regulating telomere elongation. Acts as an activator of spontaneous telomere sister chromatid exchange (T-SCE) and telomere elongation in undifferentiated ES cells. This is Zinc finger and SCAN domain-containing protein 4 (ZSCAN4) from Pongo pygmaeus (Bornean orangutan).